The following is an 897-amino-acid chain: N-terminal acetyltransferase A complex auxiliary subunit NAA15 (897 aa).

7 TPR repeats span residues 77 to 110 (HVCW…DPDN), 111 to 144 (LEIL…KPNH), 189 to 222 (TEMI…IVDK), 223 to 256 (LSYK…NPDN), 298 to 331 (SSAV…KGVP), 380 to 413 (LWTL…TPTV), and 488 to 523 (QCMW…YADI). Disordered stretches follow at residues 578–640 (KSTA…DPHG) and 863–897 (SRKS…SVAT). A compositionally biased stretch (basic and acidic residues) spans 602–617 (KAEARAKKEAESKSEE). Positions 863 to 872 (SRKSNENGDT) are enriched in polar residues.

As to quaternary structure, part of the NatA complex. Associates with ribosomes. Interacts with NAA10. In terms of tissue distribution, expressed in leaves, roots, shoots and flowers.

Functionally, auxiliary subunit of the NatA N-alpha-acetyltransferase complex. Required for male gametocyte development, embryogenesis, suspensor development and the formation of the quiescent center (QC) in the root meristem. Involved in plant immunity through the regulation of SNC1 stability. Required for embryo development. This chain is N-terminal acetyltransferase A complex auxiliary subunit NAA15, found in Arabidopsis thaliana (Mouse-ear cress).